Reading from the N-terminus, the 132-residue chain is Large ribosomal subunit protein bL17 (132 aa).

It belongs to the bacterial ribosomal protein bL17 family. Part of the 50S ribosomal subunit. Contacts protein L32.

The protein is Large ribosomal subunit protein bL17 of Anaplasma phagocytophilum (strain HZ).